The following is an 85-amino-acid chain: Cell division protein ZapA (85 aa).

Residues 60-85 (AVNVVHDYLKLKEQYEKLEIQLKEKE) are a coiled coil.

It belongs to the ZapA family. Type 2 subfamily. As to quaternary structure, homodimer. Interacts with FtsZ.

The protein resides in the cytoplasm. Functionally, activator of cell division through the inhibition of FtsZ GTPase activity, therefore promoting FtsZ assembly into bundles of protofilaments necessary for the formation of the division Z ring. It is recruited early at mid-cell but it is not essential for cell division. The chain is Cell division protein ZapA from Bacillus pumilus (strain SAFR-032).